Consider the following 568-residue polypeptide: Urease subunit alpha (568 aa).

The 438-residue stretch at 131–568 (GGIDTHIHFI…LPMAQRYFLF (438 aa)) folds into the Urease domain. Ni(2+) is bound by residues H136, H138, and K219. K219 bears the N6-carboxylysine mark. H221 lines the substrate pocket. Residues H248 and H274 each coordinate Ni(2+). H322 serves as the catalytic Proton donor. Ni(2+) is bound at residue D362.

The protein belongs to the metallo-dependent hydrolases superfamily. Urease alpha subunit family. In terms of assembly, heterotrimer of UreA (gamma), UreB (beta) and UreC (alpha) subunits. Three heterotrimers associate to form the active enzyme. The cofactor is Ni cation. Post-translationally, carboxylation allows a single lysine to coordinate two nickel ions.

It is found in the cytoplasm. The enzyme catalyses urea + 2 H2O + H(+) = hydrogencarbonate + 2 NH4(+). It participates in nitrogen metabolism; urea degradation; CO(2) and NH(3) from urea (urease route): step 1/1. The chain is Urease subunit alpha from Trichormus variabilis (strain ATCC 29413 / PCC 7937) (Anabaena variabilis).